Here is a 348-residue protein sequence, read N- to C-terminus: Holliday junction branch migration complex subunit RuvB (348 aa).

Over residues M1–S10 the composition is skewed to polar residues. The disordered stretch occupies residues M1–L41. Positions P13–Y197 are large ATPase domain (RuvB-L). A compositionally biased stretch (basic and acidic residues) spans S28 to L41. ATP-binding residues include L36, R37, G78, K81, T82, T83, R187, Y197, and R234. T82 contacts Mg(2+). The tract at residues G198–R269 is small ATPAse domain (RuvB-S). The interval H272–A348 is head domain (RuvB-H). DNA contacts are provided by R327 and R332.

It belongs to the RuvB family. In terms of assembly, homohexamer. Forms an RuvA(8)-RuvB(12)-Holliday junction (HJ) complex. HJ DNA is sandwiched between 2 RuvA tetramers; dsDNA enters through RuvA and exits via RuvB. An RuvB hexamer assembles on each DNA strand where it exits the tetramer. Each RuvB hexamer is contacted by two RuvA subunits (via domain III) on 2 adjacent RuvB subunits; this complex drives branch migration. In the full resolvosome a probable DNA-RuvA(4)-RuvB(12)-RuvC(2) complex forms which resolves the HJ.

The protein resides in the cytoplasm. The catalysed reaction is ATP + H2O = ADP + phosphate + H(+). In terms of biological role, the RuvA-RuvB-RuvC complex processes Holliday junction (HJ) DNA during genetic recombination and DNA repair, while the RuvA-RuvB complex plays an important role in the rescue of blocked DNA replication forks via replication fork reversal (RFR). RuvA specifically binds to HJ cruciform DNA, conferring on it an open structure. The RuvB hexamer acts as an ATP-dependent pump, pulling dsDNA into and through the RuvAB complex. RuvB forms 2 homohexamers on either side of HJ DNA bound by 1 or 2 RuvA tetramers; 4 subunits per hexamer contact DNA at a time. Coordinated motions by a converter formed by DNA-disengaged RuvB subunits stimulates ATP hydrolysis and nucleotide exchange. Immobilization of the converter enables RuvB to convert the ATP-contained energy into a lever motion, pulling 2 nucleotides of DNA out of the RuvA tetramer per ATP hydrolyzed, thus driving DNA branch migration. The RuvB motors rotate together with the DNA substrate, which together with the progressing nucleotide cycle form the mechanistic basis for DNA recombination by continuous HJ branch migration. Branch migration allows RuvC to scan DNA until it finds its consensus sequence, where it cleaves and resolves cruciform DNA. This is Holliday junction branch migration complex subunit RuvB from Parasynechococcus marenigrum (strain WH8102).